We begin with the raw amino-acid sequence, 838 residues long: Semaphorin-4G (838 aa).

The N-terminal stretch at 1-17 is a signal peptide; sequence MWGRLWPLLLSILTATA. At 18 to 675 the chain is on the extracellular side; it reads VPGPSLRRPS…GAQLAPDVRL (658 aa). Positions 35–505 constitute a Sema domain; the sequence is RMTIPYEELS…APSGVIQLPL (471 aa). Residues asparagine 55, asparagine 111, and asparagine 126 are each glycosylated (N-linked (GlcNAc...) asparagine). Cysteine 104 and cysteine 115 are disulfide-bonded. Intrachain disulfides connect cysteine 133–cysteine 142, cysteine 270–cysteine 377, and cysteine 294–cysteine 337. Residue asparagine 388 is glycosylated (N-linked (GlcNAc...) asparagine). Residues 507-558 form the PSI domain; the sequence is SCSRYRSCYDCILARDPYCGWDPGTHACAAATTIANRTALIQDIERGNRGCE. Cystine bridges form between cysteine 508-cysteine 525 and cysteine 517-cysteine 534. N-linked (GlcNAc...) asparagine glycans are attached at residues asparagine 542 and asparagine 598. Positions 567–649 constitute an Ig-like C2-type domain; the sequence is PPLKTRSVLR…RTLLASYSLT (83 aa). A disulfide bridge connects residues cysteine 584 and cysteine 632. A helical membrane pass occupies residues 676–696; it reads LYVLAIAALGGLCLILASSLL. Residues 697-838 lie on the Cytoplasmic side of the membrane; sequence YVACLREGRR…LVEQLDESSV (142 aa). Residues 723-777 form a disordered region; sequence SAVQLQTVSGQCPGEEDEGDDEGAGGLEGSCLQIIPGEGAPAPPPPPPPPPPAEL. A compositionally biased stretch (acidic residues) spans 736–745; the sequence is GEEDEGDDEG. Pro residues predominate over residues 763-775; sequence PAPPPPPPPPPPA. A phosphoserine mark is found at serine 795 and serine 837.

It belongs to the semaphorin family. As to quaternary structure, interacts with PLXNB2.

It is found in the cell membrane. Its function is as follows. Cell surface receptor for PLXNB2. May play a role in axon guidance. The chain is Semaphorin-4G (SEMA4G) from Homo sapiens (Human).